Here is a 445-residue protein sequence, read N- to C-terminus: Pre-B-cell leukemia transcription factor 2 (445 aa).

The interval 13–44 (VGIPGLPIHGGPQTLTPHPMHEPPTDNGEPRK) is disordered. Over residues 31–44 (PMHEPPTDNGEPRK) the composition is skewed to basic and acidic residues. In terms of domain architecture, PBC spans 42 to 236 (PRKQDIGDIL…VMILRSRFLD (195 aa)). The interval 49–128 (DILQQIMTIT…EGVAGPEKGG (80 aa)) is PBC-A. A PBC-B region spans residues 131–236 (AAAAAAAAAS…VMILRSRFLD (106 aa)). Residues 237–299 (ARRKRRNFSK…NKRIRYKKNI (63 aa)) constitute a DNA-binding region (homeobox; TALE-type). Over residues 319–332 (QGGHSGANSPTTPT) the composition is skewed to polar residues. Positions 319 to 338 (QGGHSGANSPTTPTSAGSGG) are disordered.

Belongs to the TALE/PBX homeobox family.

The protein resides in the nucleus. Functionally, transcriptional activator that binds the sequence 5'-ATCAATCAA-3'. This is Pre-B-cell leukemia transcription factor 2 (pbx2) from Xenopus laevis (African clawed frog).